The primary structure comprises 570 residues: Urease subunit alpha (570 aa).

Histidine 137, histidine 139, and lysine 220 together coordinate Ni(2+). Lysine 220 is modified (N6-carboxylysine). Substrate is bound at residue histidine 222. Residues histidine 249 and histidine 275 each contribute to the Ni(2+) site. Histidine 323 functions as the Proton donor in the catalytic mechanism. A Ni(2+)-binding site is contributed by aspartate 363.

It belongs to the metallo-dependent hydrolases superfamily. Urease alpha subunit family. As to quaternary structure, heterotrimer of UreA (gamma), UreB (beta) and UreC (alpha) subunits. Three heterotrimers associate to form the active enzyme. Ni cation serves as cofactor. Post-translationally, carboxylation allows a single lysine to coordinate two nickel ions.

It localises to the cytoplasm. The enzyme catalyses urea + 2 H2O + H(+) = hydrogencarbonate + 2 NH4(+). It functions in the pathway nitrogen metabolism; urea degradation; CO(2) and NH(3) from urea (urease route): step 1/1. The chain is Urease subunit alpha from Lachnoclostridium phytofermentans (strain ATCC 700394 / DSM 18823 / ISDg) (Clostridium phytofermentans).